Here is a 292-residue protein sequence, read N- to C-terminus: Bis(5'-nucleosyl)-tetraphosphatase, symmetrical (292 aa).

The interval 271–292 (LSIEHPRHTHTPRRQAKKHSKK) is disordered. Over residues 277 to 292 (RHTHTPRRQAKKHSKK) the composition is skewed to basic residues.

This sequence belongs to the Ap4A hydrolase family.

The catalysed reaction is P(1),P(4)-bis(5'-adenosyl) tetraphosphate + H2O = 2 ADP + 2 H(+). Functionally, hydrolyzes diadenosine 5',5'''-P1,P4-tetraphosphate to yield ADP. This chain is Bis(5'-nucleosyl)-tetraphosphatase, symmetrical (apaH), found in Xylella fastidiosa (strain 9a5c).